Here is a 1192-residue protein sequence, read N- to C-terminus: Chromosome partition protein Smc (1192 aa).

Position 31-38 (31-38) interacts with ATP; that stretch reads PNGSGKSN. Coiled coils occupy residues 164 to 197, 234 to 292, 333 to 369, and 396 to 464; these read AGISRFKAKKVEAERRLERVQTNLTRLGDIVDEV, LTLS…RSEL, SAIADLRKTIAALEVAEAELADVQQKKESIAAKRDVE, and EHEA…DAKV. Positions 522 to 636 constitute an SMC hinge domain; the sequence is KDLVGIVADC…LVDTLATAIG (115 aa). 3 coiled-coil regions span residues 676 to 736, 772 to 902, and 986 to 1030; these read RSEL…AKLH, ELAV…EREA, and GSVN…INAD.

The protein belongs to the SMC family. In terms of assembly, homodimer.

It is found in the cytoplasm. Functionally, required for chromosome condensation and partitioning. The chain is Chromosome partition protein Smc from Rhodopirellula baltica (strain DSM 10527 / NCIMB 13988 / SH1).